Here is a 387-residue protein sequence, read N- to C-terminus: Formate-dependent phosphoribosylglycinamide formyltransferase (387 aa).

Residues 12 to 13 and Glu-72 each bind N(1)-(5-phospho-beta-D-ribosyl)glycinamide; that span reads EL. ATP-binding positions include Arg-104, Lys-145, 150–155, 185–188, and Glu-193; these read SSGKGQ and EEFI. The ATP-grasp domain maps to 109-300; it reads DLAAKDLKLL…EFELHLRAIL (192 aa). 2 residues coordinate Mg(2+): Glu-258 and Glu-270. N(1)-(5-phospho-beta-D-ribosyl)glycinamide is bound by residues Asp-277, Lys-348, and 355 to 356; that span reads RR.

Belongs to the PurK/PurT family. Homodimer.

The catalysed reaction is N(1)-(5-phospho-beta-D-ribosyl)glycinamide + formate + ATP = N(2)-formyl-N(1)-(5-phospho-beta-D-ribosyl)glycinamide + ADP + phosphate + H(+). Its pathway is purine metabolism; IMP biosynthesis via de novo pathway; N(2)-formyl-N(1)-(5-phospho-D-ribosyl)glycinamide from N(1)-(5-phospho-D-ribosyl)glycinamide (formate route): step 1/1. Functionally, involved in the de novo purine biosynthesis. Catalyzes the transfer of formate to 5-phospho-ribosyl-glycinamide (GAR), producing 5-phospho-ribosyl-N-formylglycinamide (FGAR). Formate is provided by PurU via hydrolysis of 10-formyl-tetrahydrofolate. This Leptospira interrogans serogroup Icterohaemorrhagiae serovar copenhageni (strain Fiocruz L1-130) protein is Formate-dependent phosphoribosylglycinamide formyltransferase.